A 322-amino-acid chain; its full sequence is Aspartate carbamoyltransferase catalytic subunit (322 aa).

Positions 65 and 66 each coordinate carbamoyl phosphate. Residue lysine 93 participates in L-aspartate binding. Positions 115, 143, and 146 each coordinate carbamoyl phosphate. 2 residues coordinate L-aspartate: arginine 176 and arginine 230. Residues glycine 271 and proline 272 each contribute to the carbamoyl phosphate site.

The protein belongs to the aspartate/ornithine carbamoyltransferase superfamily. ATCase family. Heterododecamer (2C3:3R2) of six catalytic PyrB chains organized as two trimers (C3), and six regulatory PyrI chains organized as three dimers (R2).

It carries out the reaction carbamoyl phosphate + L-aspartate = N-carbamoyl-L-aspartate + phosphate + H(+). Its pathway is pyrimidine metabolism; UMP biosynthesis via de novo pathway; (S)-dihydroorotate from bicarbonate: step 2/3. Functionally, catalyzes the condensation of carbamoyl phosphate and aspartate to form carbamoyl aspartate and inorganic phosphate, the committed step in the de novo pyrimidine nucleotide biosynthesis pathway. The polypeptide is Aspartate carbamoyltransferase catalytic subunit (Brucella canis (strain ATCC 23365 / NCTC 10854 / RM-666)).